Reading from the N-terminus, the 591-residue chain is L-fucose isomerase (591 aa).

Active-site proton acceptor residues include glutamate 337 and aspartate 361. Mn(2+)-binding residues include glutamate 337, aspartate 361, and histidine 528.

The protein belongs to the L-fucose isomerase family. Homohexamer. Mn(2+) serves as cofactor.

The protein localises to the cytoplasm. It carries out the reaction L-fucose = L-fuculose. It participates in carbohydrate degradation; L-fucose degradation; L-lactaldehyde and glycerone phosphate from L-fucose: step 1/3. Functionally, converts the aldose L-fucose into the corresponding ketose L-fuculose. The sequence is that of L-fucose isomerase from Salmonella heidelberg (strain SL476).